Consider the following 142-residue polypeptide: Large ribosomal subunit protein uL11 (142 aa).

Belongs to the universal ribosomal protein uL11 family. As to quaternary structure, part of the ribosomal stalk of the 50S ribosomal subunit. Interacts with L10 and the large rRNA to form the base of the stalk. L10 forms an elongated spine to which L12 dimers bind in a sequential fashion forming a multimeric L10(L12)X complex. One or more lysine residues are methylated.

Functionally, forms part of the ribosomal stalk which helps the ribosome interact with GTP-bound translation factors. The polypeptide is Large ribosomal subunit protein uL11 (Bartonella bacilliformis (strain ATCC 35685 / KC583 / Herrer 020/F12,63)).